The sequence spans 86 residues: Small ribosomal subunit protein uS15c (86 aa).

It belongs to the universal ribosomal protein uS15 family. In terms of assembly, part of the 30S ribosomal subunit.

It is found in the plastid. The protein resides in the chloroplast. The polypeptide is Small ribosomal subunit protein uS15c (rps15) (Cryptomeria japonica (Japanese cedar)).